The chain runs to 416 residues: MAGPFSRLLSARPGLRLLALAGAGSLAAGFLLRSEPVRAASERRRLYPPSAEYPDLRKHNNCMASHLTPAVYARLCDKTTPTGWTLDQCIQTGVDNPGHPFIKTVGMVAGDEETYEVFAELFDPVIQERHNGYDPRTMKHTTDLDASKIRSGYFDERYVLSSRVRTGRSIRGLSLPPACTRAERREVERVVVDALSGLKGDLAGRYYRLSEMTEAEQQQLIDDHFLFDKPVSPLLTAAGMARDWPDARGIWHNNEKSFLIWVNEEDHTRVISMEKGGNMKKVFERFCRGLKEVERLIQERGWEFMWNERLGYILTCPSNLGTGLRAGVHIKLPLLSKDSRFPKILENLRLQKRGTGGVDTAATGSVFDISNLDRLGKSEVELVQLVIDGVNFLIDCERRLERGQDIRIPPPLPNKH.

The N-terminal 39 residues, 1-39 (MAGPFSRLLSARPGLRLLALAGAGSLAAGFLLRSEPVRA), are a transit peptide targeting the mitochondrion. The segment at 40 to 64 (ASERRRLYPPSAEYPDLRKHNNCMA) is cardiolipin-binding. A Phosphagen kinase N-terminal domain is found at 45 to 131 (RLYPPSAEYP…FDPVIQERHN (87 aa)). Serine 151 is modified (phosphoserine). Residues 158–400 (YVLSSRVRTG…NFLIDCERRL (243 aa)) enclose the Phosphagen kinase C-terminal domain. 161–165 (SSRVR) lines the ATP pocket. A Phosphoserine modification is found at serine 196. Phosphothreonine is present on threonine 213. ATP is bound at residue histidine 224. Phosphoserine is present on serine 232. ATP is bound by residues arginine 269, arginine 325, and 353–358 (RGTGGV). Threonine 355 carries the post-translational modification Phosphothreonine. Residue serine 365 is modified to Phosphoserine. ATP is bound at residue aspartate 368.

This sequence belongs to the ATP:guanido phosphotransferase family. In terms of assembly, exists as an octamer composed of four MTCK homodimers.

It localises to the mitochondrion inner membrane. The enzyme catalyses creatine + ATP = N-phosphocreatine + ADP + H(+). Functionally, reversibly catalyzes the transfer of phosphate between ATP and various phosphogens (e.g. creatine phosphate). Creatine kinase isoenzymes play a central role in energy transduction in tissues with large, fluctuating energy demands, such as skeletal muscle, heart, brain and spermatozoa. The sequence is that of Creatine kinase U-type, mitochondrial (CKMT1) from Bos taurus (Bovine).